The primary structure comprises 98 residues: Large ribosomal subunit protein uL23 (98 aa).

It belongs to the universal ribosomal protein uL23 family. Part of the 50S ribosomal subunit. Contacts protein L29, and trigger factor when it is bound to the ribosome.

One of the early assembly proteins it binds 23S rRNA. One of the proteins that surrounds the polypeptide exit tunnel on the outside of the ribosome. Forms the main docking site for trigger factor binding to the ribosome. This is Large ribosomal subunit protein uL23 from Nitrobacter winogradskyi (strain ATCC 25391 / DSM 10237 / CIP 104748 / NCIMB 11846 / Nb-255).